Here is a 127-residue protein sequence, read N- to C-terminus: Large ribosomal subunit protein bL21c (127 aa).

It belongs to the bacterial ribosomal protein bL21 family. As to quaternary structure, part of the 50S ribosomal subunit.

The protein localises to the plastid. Its subcellular location is the chloroplast. This protein binds to 23S rRNA. The polypeptide is Large ribosomal subunit protein bL21c (Adiantum capillus-veneris (Maidenhair fern)).